A 396-amino-acid chain; its full sequence is Elongation factor Tu (396 aa).

The region spanning 10-206 (KPHVNVGTIG…ALDSYIPTPE (197 aa)) is the tr-type G domain. The segment at 19 to 26 (GHVDHGKT) is G1. 19–26 (GHVDHGKT) is a binding site for GTP. Mg(2+) is bound at residue threonine 26. Residues 60–64 (GITIN) are G2. A G3 region spans residues 81–84 (DCPG). Residues 81-85 (DCPGH) and 136-139 (NKCD) each bind GTP. A G4 region spans residues 136–139 (NKCD). The segment at 174 to 176 (SAL) is G5.

The protein belongs to the TRAFAC class translation factor GTPase superfamily. Classic translation factor GTPase family. EF-Tu/EF-1A subfamily. In terms of assembly, monomer.

It localises to the cytoplasm. It catalyses the reaction GTP + H2O = GDP + phosphate + H(+). GTP hydrolase that promotes the GTP-dependent binding of aminoacyl-tRNA to the A-site of ribosomes during protein biosynthesis. The chain is Elongation factor Tu from Azoarcus sp. (strain BH72).